The primary structure comprises 165 residues: Large ribosomal subunit protein uL10 (165 aa).

It belongs to the universal ribosomal protein uL10 family. Part of the ribosomal stalk of the 50S ribosomal subunit. The N-terminus interacts with L11 and the large rRNA to form the base of the stalk. The C-terminus forms an elongated spine to which L12 dimers bind in a sequential fashion forming a multimeric L10(L12)X complex.

Its function is as follows. Forms part of the ribosomal stalk, playing a central role in the interaction of the ribosome with GTP-bound translation factors. This Dechloromonas aromatica (strain RCB) protein is Large ribosomal subunit protein uL10.